The sequence spans 104 residues: Pyrimidine/purine nucleoside phosphorylase (104 aa).

The protein belongs to the nucleoside phosphorylase PpnP family.

The enzyme catalyses a purine D-ribonucleoside + phosphate = a purine nucleobase + alpha-D-ribose 1-phosphate. It catalyses the reaction adenosine + phosphate = alpha-D-ribose 1-phosphate + adenine. The catalysed reaction is cytidine + phosphate = cytosine + alpha-D-ribose 1-phosphate. It carries out the reaction guanosine + phosphate = alpha-D-ribose 1-phosphate + guanine. The enzyme catalyses inosine + phosphate = alpha-D-ribose 1-phosphate + hypoxanthine. It catalyses the reaction thymidine + phosphate = 2-deoxy-alpha-D-ribose 1-phosphate + thymine. The catalysed reaction is uridine + phosphate = alpha-D-ribose 1-phosphate + uracil. It carries out the reaction xanthosine + phosphate = alpha-D-ribose 1-phosphate + xanthine. Catalyzes the phosphorolysis of diverse nucleosides, yielding D-ribose 1-phosphate and the respective free bases. Can use uridine, adenosine, guanosine, cytidine, thymidine, inosine and xanthosine as substrates. Also catalyzes the reverse reactions. This is Pyrimidine/purine nucleoside phosphorylase from Trichlorobacter lovleyi (strain ATCC BAA-1151 / DSM 17278 / SZ) (Geobacter lovleyi).